Consider the following 570-residue polypeptide: Probable metalloreductase AIM14 (570 aa).

Over M1–N20 the chain is Extracellular. Residues I21–L41 traverse the membrane as a helical segment. The Cytoplasmic segment spans residues R42 to P69. Residues A70–L90 form a helical membrane-spanning segment. Residues T91–R141 lie on the Extracellular side of the membrane. Positions L101–L219 constitute a Ferric oxidoreductase domain. Residues I142–D162 form a helical membrane-spanning segment. Over N163–N176 the chain is Cytoplasmic. Residues F177–M197 traverse the membrane as a helical segment. The Extracellular segment spans residues R198 to N373. Residues F250–P388 enclose the FAD-binding FR-type domain. The chain crosses the membrane as a helical span at residues I374–F394. Residues N395–L570 are Cytoplasmic-facing. Residues I480–N505 are compositionally biased toward polar residues. The tract at residues I480–I509 is disordered.

This sequence belongs to the ferric reductase (FRE) family. AIM14 subfamily. As to quaternary structure, interacts with ribosomes.

It is found in the membrane. Functionally, probable cell surface metalloreductase. May be involved in iron or copper homeostasis. The protein is Probable metalloreductase AIM14 (AIM14) of Saccharomyces cerevisiae (strain ATCC 204508 / S288c) (Baker's yeast).